Reading from the N-terminus, the 526-residue chain is Amine oxidase [flavin-containing] A (526 aa).

Position 1 is an N-acetylmethionine (M1). Residues 1-497 (MTDLEKPNLA…HTFLERNLPS (497 aa)) lie on the Cytoplasmic side of the membrane. A Phosphoserine modification is found at S383. C406 carries the S-8alpha-FAD cysteine modification. Residues 498 to 518 (VPGLLKITGVSTSVALLCFVL) traverse the membrane as a helical; Anchor for type IV membrane protein segment. Topologically, residues 519–526 (YKIKKLPC) are mitochondrial intermembrane. The interval 520–522 (KIK) is interaction with membrane phospholipid headgroups.

Belongs to the flavin monoamine oxidase family. Monomer, homo- or heterodimer (containing two subunits of similar size). Each subunit contains a covalently bound flavin. Enzymatically active as monomer. FAD serves as cofactor.

It is found in the mitochondrion outer membrane. The enzyme catalyses a secondary aliphatic amine + O2 + H2O = a primary amine + an aldehyde + H2O2. The catalysed reaction is a primary methyl amine + O2 + H2O = an aldehyde + H2O2 + NH4(+). It catalyses the reaction (R)-adrenaline + O2 + H2O = (R)-3,4-dihydroxymandelaldehyde + methylamine + H2O2. It carries out the reaction dopamine + O2 + H2O = 3,4-dihydroxyphenylacetaldehyde + H2O2 + NH4(+). The enzyme catalyses tyramine + O2 + H2O = (4-hydroxyphenyl)acetaldehyde + H2O2 + NH4(+). The catalysed reaction is (R)-noradrenaline + O2 + H2O = (R)-3,4-dihydroxymandelaldehyde + H2O2 + NH4(+). It catalyses the reaction serotonin + O2 + H2O = (5-hydroxyindol-3-yl)acetaldehyde + H2O2 + NH4(+). It carries out the reaction kynuramine + O2 + H2O = 3-(2-aminophenyl)-3-oxopropanal + H2O2 + NH4(+). The enzyme catalyses tryptamine + O2 + H2O = indole-3-acetaldehyde + H2O2 + NH4(+). The catalysed reaction is 2-phenylethylamine + O2 + H2O = 2-phenylacetaldehyde + H2O2 + NH4(+). Functionally, catalyzes the oxidative deamination of primary and some secondary amine such as neurotransmitters, with concomitant reduction of oxygen to hydrogen peroxide and has important functions in the metabolism of neuroactive and vasoactive amines in the central nervous system and peripheral tissues. Preferentially oxidizes serotonin. Also catalyzes the oxidative deamination of kynuramine to 3-(2-aminophenyl)-3-oxopropanal that can spontaneously condense to 4-hydroxyquinoline. In Rattus norvegicus (Rat), this protein is Amine oxidase [flavin-containing] A.